A 437-amino-acid chain; its full sequence is Bifunctional protein GlmU (437 aa).

Positions 1-223 are pyrophosphorylase; the sequence is MHNTAVILAA…WDECRGVNSR (223 aa). UDP-N-acetyl-alpha-D-glucosamine is bound by residues 8 to 11, lysine 22, glutamine 70, 75 to 76, 96 to 98, glycine 135, glutamate 149, asparagine 164, and asparagine 221; these read LAAG, GT, and YGD. Aspartate 98 contacts Mg(2+). Mg(2+) is bound at residue asparagine 221. A linker region spans residues 224-244; the sequence is AELAAAEAAMQSRLRAAALAA. The segment at 245–437 is N-acetyltransferase; it reads GVTMTAPETV…AELRMTKGKR (193 aa). Residues arginine 310 and lysine 328 each coordinate UDP-N-acetyl-alpha-D-glucosamine. Histidine 340 functions as the Proton acceptor in the catalytic mechanism. Residues tyrosine 343 and asparagine 354 each coordinate UDP-N-acetyl-alpha-D-glucosamine. Acetyl-CoA contacts are provided by residues alanine 357, 363 to 364, serine 382, alanine 400, and arginine 417; that span reads NY.

In the N-terminal section; belongs to the N-acetylglucosamine-1-phosphate uridyltransferase family. The protein in the C-terminal section; belongs to the transferase hexapeptide repeat family. Homotrimer. It depends on Mg(2+) as a cofactor.

The protein localises to the cytoplasm. It catalyses the reaction alpha-D-glucosamine 1-phosphate + acetyl-CoA = N-acetyl-alpha-D-glucosamine 1-phosphate + CoA + H(+). It carries out the reaction N-acetyl-alpha-D-glucosamine 1-phosphate + UTP + H(+) = UDP-N-acetyl-alpha-D-glucosamine + diphosphate. It participates in nucleotide-sugar biosynthesis; UDP-N-acetyl-alpha-D-glucosamine biosynthesis; N-acetyl-alpha-D-glucosamine 1-phosphate from alpha-D-glucosamine 6-phosphate (route II): step 2/2. It functions in the pathway nucleotide-sugar biosynthesis; UDP-N-acetyl-alpha-D-glucosamine biosynthesis; UDP-N-acetyl-alpha-D-glucosamine from N-acetyl-alpha-D-glucosamine 1-phosphate: step 1/1. Its pathway is bacterial outer membrane biogenesis; LPS lipid A biosynthesis. Functionally, catalyzes the last two sequential reactions in the de novo biosynthetic pathway for UDP-N-acetylglucosamine (UDP-GlcNAc). The C-terminal domain catalyzes the transfer of acetyl group from acetyl coenzyme A to glucosamine-1-phosphate (GlcN-1-P) to produce N-acetylglucosamine-1-phosphate (GlcNAc-1-P), which is converted into UDP-GlcNAc by the transfer of uridine 5-monophosphate (from uridine 5-triphosphate), a reaction catalyzed by the N-terminal domain. The polypeptide is Bifunctional protein GlmU (Acidiphilium cryptum (strain JF-5)).